Consider the following 622-residue polypeptide: Protein FAM234B (622 aa).

A disordered region spans residues 1 to 68 (MATVLSRALK…EPDSDAEVAE (68 aa)). At S16 the chain carries Phosphoserine. T26 carries the post-translational modification Phosphothreonine. Phosphoserine occurs at positions 30, 33, and 62. The helical transmembrane segment at 104–124 (TSVFLLTLGISMILVLLCAFL) threads the bilayer.

This sequence belongs to the FAM234 family.

The protein localises to the membrane. It localises to the golgi outpost. Its subcellular location is the cytoplasm. It is found in the cytoskeleton. The protein resides in the microtubule organizing center. The polypeptide is Protein FAM234B (Homo sapiens (Human)).